Consider the following 112-residue polypeptide: Large ribosomal subunit protein eL33y (112 aa).

This sequence belongs to the eukaryotic ribosomal protein eL33 family.

The sequence is that of Large ribosomal subunit protein eL33y (RPL35AC) from Arabidopsis thaliana (Mouse-ear cress).